A 1279-amino-acid polypeptide reads, in one-letter code: Talin-A (1279 aa).

The FERM domain occupies 84-365 (RPQKFKLLDG…GYIEIIMKAR (282 aa)).

The protein localises to the cytoplasm. The protein resides in the cytoskeleton. It localises to the cell cortex. Actin-binding protein that may be involved in the control of cell motility and chemotaxis. This Dictyostelium discoideum (Social amoeba) protein is Talin-A (talA).